A 77-amino-acid chain; its full sequence is Conotoxin ArMKLT2-0251 (77 aa).

A signal peptide spans 1-22; sequence MKLTCVLIVAVLILTACQLIAA. A propeptide spanning residues 23–46 is cleaved from the precursor; it reads DDSRDLKRFSRRKMRDGMLNTKNM. Gln49 carries the post-translational modification Pyrrolidone carboxylic acid. 3 disulfide bridges follow: Cys50-Cys65, Cys57-Cys68, and Cys64-Cys73.

Belongs to the conotoxin O1 superfamily. As to expression, expressed by the venom duct.

It is found in the secreted. The sequence is that of Conotoxin ArMKLT2-0251 from Conus arenatus (Sand-dusted cone).